Reading from the N-terminus, the 204-residue chain is MAAARPALGRVLPGSSMLFLCDMQEKFRHVVYFRQIVSMAARMLKVARLLSVPTVLTEQYPQGLGPTVPELGAQGLQPYSKTCFSMVPAVQQELDARPQLRSVLLCGVETQACILQTALDLLDRGLQVHVVVDACTSRSQVDRLVALSRLRQSGAFLSTSEGLIFQLVGDATHPQFKEIQKLVKEPSPDSGLLGLFQDQNPLFR.

This sequence belongs to the isochorismatase family. In terms of assembly, interacts with CDKN2A.

The protein resides in the cytoplasm. Its subcellular location is the nucleus. This Bos taurus (Bovine) protein is Isochorismatase domain-containing protein 2 (ISOC2).